A 512-amino-acid polypeptide reads, in one-letter code: Centrosomal protein CCDC61 (512 aa).

An N-acetylmethionine modification is found at methionine 1. Residues 1 to 143 (MDQPAGLQVD…PLPLPYQGKP (143 aa)) are head domain. Coiled coils occupy residues 178–205 (IWHL…SREE) and 248–275 (CRRL…LTSE). The disordered stretch occupies residues 276–477 (LALYKRGRRT…KSLANSGGWV (202 aa)). Threonine 285 carries the post-translational modification Phosphothreonine. The segment covering 293 to 306 (TREDRASSSRERSA) has biased composition (basic and acidic residues). Residues serine 334, serine 336, serine 373, and serine 376 each carry the phosphoserine modification. A compositionally biased stretch (low complexity) spans 407 to 425 (RSSSVDSFRSRCSSASSCS). A phosphoserine mark is found at serine 447 and serine 473.

This sequence belongs to the CCDC61 family. As to quaternary structure, forms homodimers (via head domain). Interacts with CEP170. Interacts with PCM1 and CEP131. Binds tubulin.

It localises to the cytoplasm. It is found in the cytoskeleton. Its subcellular location is the microtubule organizing center. The protein resides in the centrosome. The protein localises to the centriolar satellite. It localises to the cilium basal body. Microtubule-binding centrosomal protein required for centriole cohesion, independently of the centrosome-associated protein/CEP250 and rootletin/CROCC linker. In interphase, required for anchoring microtubule at the mother centriole subdistal appendages and for centrosome positioning. During mitosis, may be involved in spindle assembly and chromatin alignment by regulating the organization of spindle microtubules into a symmetrical structure. Has been proposed to play a role in CEP170 recruitment to centrosomes. However, this function could not be confirmed. Plays a non-essential role in ciliogenesis. In Homo sapiens (Human), this protein is Centrosomal protein CCDC61.